The sequence spans 552 residues: L-ascorbate oxidase (552 aa).

2 consecutive Plastocyanin-like domains span residues 1–122 (SQIR…LIVD) and 134–300 (DGEI…NYLP). Intrachain disulfides connect Cys-19/Cys-201, Cys-81/Cys-538, and Cys-180/Cys-193. Cu cation is bound by residues His-60 and His-62. Asn-92 carries an N-linked (GlcNAc...) asparagine glycan. Cu cation contacts are provided by His-104 and His-106. N-linked (GlcNAc...) asparagine glycans are attached at residues Asn-325 and Asn-440. Residues 344–523 (NRRIFLLNTQ…HMGMGVVFAE (180 aa)) enclose the Plastocyanin-like 3 domain. Positions 445, 448, 450, 506, 507, 508, 512, and 517 each coordinate Cu cation.

This sequence belongs to the multicopper oxidase family. As to quaternary structure, dimer. Cu cation is required as a cofactor.

The protein localises to the secreted. The enzyme catalyses 4 L-ascorbate + O2 = 4 monodehydro-L-ascorbate radical + 2 H2O. Its function is as follows. May be involved in a redox system involving ascorbic acid. This chain is L-ascorbate oxidase, found in Cucurbita pepo var. melopepo (Zucchini).